The chain runs to 140 residues: Sex-regulated protein janus-B (140 aa).

Arg42 contributes to the substrate binding site. The active-site Proton acceptor is His69. Cys110–Thr112 is a substrate binding site.

Belongs to the janus family.

JanA and janB regulate somatic sex differentiation. The chain is Sex-regulated protein janus-B (janB) from Drosophila pseudoobscura pseudoobscura (Fruit fly).